Reading from the N-terminus, the 140-residue chain is Small ribosomal subunit protein uS12 (140 aa).

The residue at position 103 (Asp103) is a 3-methylthioaspartic acid. The segment at 120 to 140 (GVQKRMQARSKYGAKRPKKGK) is disordered. A compositionally biased stretch (basic residues) spans 125–140 (MQARSKYGAKRPKKGK).

This sequence belongs to the universal ribosomal protein uS12 family. In terms of assembly, part of the 30S ribosomal subunit. Contacts proteins S8 and S17. May interact with IF1 in the 30S initiation complex.

In terms of biological role, with S4 and S5 plays an important role in translational accuracy. Functionally, interacts with and stabilizes bases of the 16S rRNA that are involved in tRNA selection in the A site and with the mRNA backbone. Located at the interface of the 30S and 50S subunits, it traverses the body of the 30S subunit contacting proteins on the other side and probably holding the rRNA structure together. The combined cluster of proteins S8, S12 and S17 appears to hold together the shoulder and platform of the 30S subunit. The sequence is that of Small ribosomal subunit protein uS12 from Desulfitobacterium hafniense (strain Y51).